We begin with the raw amino-acid sequence, 640 residues long: MAPKPPSGTSSRAWDAVTPALSEWVLEAMSSMGFTRMTPVQASAIPLFMAHKDVVVEAVTGSGKTLSFLIPVVEKLLRLEEPIKKHHIGAIIISPTRELASQIYNVLSSLLAFHPPSAAAINPSEDDDAPRPKFPSSTLKVVPQLLLGGSTTPAEDLSTFLKRSPNVLVSTPGRLLELLSSPHVHCPQSSFEMLVLDEADRLLDLGFKETLQNILRRLPKQRRTGLFSASVSEAVDQIVRVGLRNPVKVMVKVKGGSGVDDKRTPASLQMTYLTTPPSHKFAALKRILSSVQPTPLKTIFFVSTCSGVDYLSAILPLLLGDDFLLIPLHGKHQANVRQKNFNRFINSHDPAILLTTDVAARGLDIPSVDLVVQIDPPSDPKSFIHRCGRAGRAGRRGLSVVLLHPGREEDYVSFLEVRKTPVVPFSPLITFSDADAAAATATARKAVLADRALHDRGQKAFVSWFRSYSKHQASSIFRVSDLDWEALGKAWGLLKLPKMPELRNFTGDKTLGVSLDWNNYAYKDKQREKRRKELLQEAAESGATQSTSNKRRATESVAWSQQAESKNKKLKRREQKKSKHEKARWEKMTEEEKQKVLETEKMVEELRKKNEEERRLRRAAAKAAGAKADGDDEEEFQGFD.

The short motif at 14–42 (WDAVTPALSEWVLEAMSSMGFTRMTPVQA) is the Q motif element. Residues 45 to 249 (IPLFMAHKDV…RVGLRNPVKV (205 aa)) enclose the Helicase ATP-binding domain. 58–65 (AVTGSGKT) provides a ligand contact to ATP. A DEAD box motif is present at residues 197 to 200 (DEAD). Positions 283–437 (ALKRILSSVQ…LITFSDADAA (155 aa)) constitute a Helicase C-terminal domain. A coiled-coil region spans residues 521-629 (AYKDKQREKR…AAKAAGAKAD (109 aa)). Disordered regions lie at residues 531-595 (RKEL…EKQK) and 607-640 (RKKN…QGFD). Over residues 568–582 (KKLKRREQKKSKHEK) the composition is skewed to basic residues. The segment covering 583-595 (ARWEKMTEEEKQK) has biased composition (basic and acidic residues). Positions 630-640 (GDDEEEFQGFD) are enriched in acidic residues.

Belongs to the DEAD box helicase family. DDX55/SPB4 subfamily. In terms of assembly, component of pre-60S ribosomal complexes.

The protein resides in the nucleus. It is found in the nucleolus. It carries out the reaction ATP + H2O = ADP + phosphate + H(+). Its function is as follows. ATP-binding RNA helicase involved in the biogenesis of 60S ribosomal subunits. Binds 90S pre-ribosomal particles and dissociates from pre-60S ribosomal particles after processing of 27SB pre-rRNA. Required for the normal formation of 18S rRNA through the processing of pre-rRNAs at sites A0, A1 and A2, and the normal formation of 25S and 5.8S rRNAs through the processing of pre-rRNAs at sites C1 and C2. The protein is ATP-dependent rRNA helicase spb4 of Neosartorya fischeri (strain ATCC 1020 / DSM 3700 / CBS 544.65 / FGSC A1164 / JCM 1740 / NRRL 181 / WB 181) (Aspergillus fischerianus).